An 82-amino-acid chain; its full sequence is Exodeoxyribonuclease 7 small subunit (82 aa).

This sequence belongs to the XseB family. In terms of assembly, heterooligomer composed of large and small subunits.

The protein localises to the cytoplasm. It catalyses the reaction Exonucleolytic cleavage in either 5'- to 3'- or 3'- to 5'-direction to yield nucleoside 5'-phosphates.. Functionally, bidirectionally degrades single-stranded DNA into large acid-insoluble oligonucleotides, which are then degraded further into small acid-soluble oligonucleotides. The protein is Exodeoxyribonuclease 7 small subunit of Mannheimia succiniciproducens (strain KCTC 0769BP / MBEL55E).